A 303-amino-acid polypeptide reads, in one-letter code: 4-diphosphocytidyl-2-C-methyl-D-erythritol kinase (303 aa).

Lys-18 is an active-site residue. 111–121 (PVASGIGGGSA) is a binding site for ATP. The active site involves Asp-153.

The protein belongs to the GHMP kinase family. IspE subfamily.

The catalysed reaction is 4-CDP-2-C-methyl-D-erythritol + ATP = 4-CDP-2-C-methyl-D-erythritol 2-phosphate + ADP + H(+). It participates in isoprenoid biosynthesis; isopentenyl diphosphate biosynthesis via DXP pathway; isopentenyl diphosphate from 1-deoxy-D-xylulose 5-phosphate: step 3/6. In terms of biological role, catalyzes the phosphorylation of the position 2 hydroxy group of 4-diphosphocytidyl-2C-methyl-D-erythritol. The chain is 4-diphosphocytidyl-2-C-methyl-D-erythritol kinase from Sinorhizobium medicae (strain WSM419) (Ensifer medicae).